Here is a 567-residue protein sequence, read N- to C-terminus: MSSRLGAVPATSGPTTFKQQRSTRIVGAKNSRTQCSIKDNSFQYTIPHDDSLSGSSSASSCEPVSDFPASFRKSAYWMKMRRIKPAATSHVEGSGGVSAKGKRKPRQEEDEDYREFPQKKHKLYGRKQRPKTQPNPKSQARRIRKEPPVYAAGSLEEQWYLEIVDKGSVSCPTCQAVGRKTIEGLKKHMENCKQEMFTCHHCGKQLRSLAGMKYHVMANHNSLPILKAGDEIDEPSERERLRTVLKRLGKLRCMRESCSSSFTSIMGYLYHVRKCGKGAAELEKMTLKCHHCGKPYRSKAGLAYHLRSEHGPISFFPESGQPECLKEMNLESKSGGRVQRRSAKIAVYHLQELASAELAKEWPKRKVLQDLVPDDRKLKYTRPGLPTFSQEVLHKWKTDIKKYHRIQCPNQGCEAVYSSVSGLKAHLGSCTLGNFVAGKYKCLLCQKEFVSESGVKYHINSVHAEDWFVVNPTTTKSFEKLMKIKQRQQEEEKRRQQHRSRRSLRRRQQPGIELPETELSLRVGKDQRRNNEELVVSASCKEPEQEPVPAQFQKVKPPKTNHKRGRK.

Residues 1 to 32 are disordered; it reads MSSRLGAVPATSGPTTFKQQRSTRIVGAKNSR. A compositionally biased stretch (polar residues) spans 12-23; sequence SGPTTFKQQRST. Residues Lys18 and Lys84 each participate in a glycyl lysine isopeptide (Lys-Gly) (interchain with G-Cter in SUMO2) cross-link. Residues 86 to 148 form a disordered region; it reads AATSHVEGSG…QARRIRKEPP (63 aa). Positions 119–130 are enriched in basic residues; that stretch reads KKHKLYGRKQRP. The C2H2-type 1 zinc finger occupies 197 to 220; it reads FTCHHCGKQLRSLAGMKYHVMANH. Residue Lys227 forms a Glycyl lysine isopeptide (Lys-Gly) (interchain with G-Cter in SUMO2) linkage. A C2H2-type 2 zinc finger spans residues 287-310; that stretch reads LKCHHCGKPYRSKAGLAYHLRSEH. A Glycyl lysine isopeptide (Lys-Gly) (interchain with G-Cter in SUMO2) cross-link involves residue Lys333. The C2H2-type 3; atypical zinc-finger motif lies at 406-430; sequence IQCPNQGCEAVYSSVSGLKAHLGSC. A C2H2-type 4 zinc finger spans residues 440-463; it reads YKCLLCQKEFVSESGVKYHINSVH. The disordered stretch occupies residues 486-567; that stretch reads QRQQEEEKRR…PKTNHKRGRK (82 aa). The segment covering 495–508 has biased composition (basic residues); that stretch reads RQQHRSRRSLRRRQ. A compositionally biased stretch (basic and acidic residues) spans 523–532; sequence VGKDQRRNNE. Over residues 556-567 the composition is skewed to basic residues; sequence KPPKTNHKRGRK.

It belongs to the krueppel C2H2-type zinc-finger protein family.

The protein localises to the nucleus. May be involved in transcriptional regulation. The polypeptide is Zinc finger protein 512 (ZNF512) (Pongo abelii (Sumatran orangutan)).